The primary structure comprises 247 residues: 2,3-bisphosphoglycerate-dependent phosphoglycerate mutase (247 aa).

Substrate-binding positions include 9-16, 22-23, arginine 61, 88-91, lysine 99, 115-116, and 183-184; these read RHGESEWN, TG, ERHY, RR, and GN. The active-site Tele-phosphohistidine intermediate is histidine 10. Glutamate 88 serves as the catalytic Proton donor/acceptor.

This sequence belongs to the phosphoglycerate mutase family. BPG-dependent PGAM subfamily.

The enzyme catalyses (2R)-2-phosphoglycerate = (2R)-3-phosphoglycerate. The protein operates within carbohydrate degradation; glycolysis; pyruvate from D-glyceraldehyde 3-phosphate: step 3/5. Functionally, catalyzes the interconversion of 2-phosphoglycerate and 3-phosphoglycerate. The polypeptide is 2,3-bisphosphoglycerate-dependent phosphoglycerate mutase (Nocardioides sp. (strain ATCC BAA-499 / JS614)).